The chain runs to 173 residues: Telomerase RNA component interacting RNase (173 aa).

Residues 1-12 (MAARGRRAEPPG) are compositionally biased toward basic and acidic residues. The disordered stretch occupies residues 1–119 (MAARGRRAEP…LSFVGKRRGG (119 aa)). Low complexity-rich tracts occupy residues 14 to 23 (EAPGPAGSGR) and 43 to 52 (SGSSPVSSGV). Residues 64 to 79 (LFKRKMEEEQRQRQEE) are compositionally biased toward basic and acidic residues. The span at 80–90 (PPPGPQRPDPP) shows a compositional bias: pro residues. Lysine 143 is modified (N6-acetyllysine).

In terms of assembly, part of the telomerase RNA 3' end complex which contains about 488 proteins.

Exoribonuclease that is part of the telomerase RNA 3' end processing complex and which has the ability to cleave all four unpaired RNA nucleotides from the 5' end or 3' end with higher efficiency for purine bases. The sequence is that of Telomerase RNA component interacting RNase from Mus musculus (Mouse).